A 151-amino-acid polypeptide reads, in one-letter code: Large ribosomal subunit protein bL9 (151 aa).

Belongs to the bacterial ribosomal protein bL9 family.

Binds to the 23S rRNA. This is Large ribosomal subunit protein bL9 from Francisella philomiragia subsp. philomiragia (strain ATCC 25017 / CCUG 19701 / FSC 153 / O#319-036).